We begin with the raw amino-acid sequence, 464 residues long: Soluble pyridine nucleotide transhydrogenase (464 aa).

An FAD-binding site is contributed by 35–44 (DSRRQVGGNC).

It belongs to the class-I pyridine nucleotide-disulfide oxidoreductase family. The cofactor is FAD.

The protein resides in the cytoplasm. It carries out the reaction NAD(+) + NADPH = NADH + NADP(+). Functionally, conversion of NADPH, generated by peripheral catabolic pathways, to NADH, which can enter the respiratory chain for energy generation. The polypeptide is Soluble pyridine nucleotide transhydrogenase (Pseudomonas savastanoi pv. phaseolicola (strain 1448A / Race 6) (Pseudomonas syringae pv. phaseolicola (strain 1448A / Race 6))).